The following is a 505-amino-acid chain: Deoxyguanosinetriphosphate triphosphohydrolase (505 aa).

Residues 66–273 (RLTHSMEVQQ…MEAADDISYC (208 aa)) form the HD domain.

It belongs to the dGTPase family. Type 1 subfamily. As to quaternary structure, homotetramer. It depends on Mg(2+) as a cofactor.

It carries out the reaction dGTP + H2O = 2'-deoxyguanosine + triphosphate + H(+). Its function is as follows. dGTPase preferentially hydrolyzes dGTP over the other canonical NTPs. This Escherichia coli O17:K52:H18 (strain UMN026 / ExPEC) protein is Deoxyguanosinetriphosphate triphosphohydrolase.